Consider the following 147-residue polypeptide: Large ribosomal subunit protein bL9 (147 aa).

It belongs to the bacterial ribosomal protein bL9 family.

Its function is as follows. Binds to the 23S rRNA. The sequence is that of Large ribosomal subunit protein bL9 from Geotalea daltonii (strain DSM 22248 / JCM 15807 / FRC-32) (Geobacter daltonii).